Reading from the N-terminus, the 146-residue chain is Anti-sigma F factor (146 aa).

This sequence belongs to the anti-sigma-factor family.

The enzyme catalyses L-seryl-[protein] + ATP = O-phospho-L-seryl-[protein] + ADP + H(+). It catalyses the reaction L-threonyl-[protein] + ATP = O-phospho-L-threonyl-[protein] + ADP + H(+). In terms of biological role, binds to sigma F and blocks its ability to form an RNA polymerase holoenzyme (E-sigma F). Phosphorylates SpoIIAA on a serine residue. This phosphorylation may enable SpoIIAA to act as an anti-anti-sigma factor that counteracts SpoIIAB and thus releases sigma F from inhibition. The protein is Anti-sigma F factor of Oceanobacillus iheyensis (strain DSM 14371 / CIP 107618 / JCM 11309 / KCTC 3954 / HTE831).